Consider the following 142-residue polypeptide: UPF0332 protein PH1297 (142 aa).

The protein belongs to the UPF0332 family.

The sequence is that of UPF0332 protein PH1297 from Pyrococcus horikoshii (strain ATCC 700860 / DSM 12428 / JCM 9974 / NBRC 100139 / OT-3).